A 222-amino-acid polypeptide reads, in one-letter code: Ras-related protein Rab11D (222 aa).

GTP is bound at residue 22–29 (GDSAVGKS). The short motif at 44 to 52 (SKATIGVEF) is the Effector region element. Residues 70 to 74 (DTAGQ) and 128 to 131 (NKTD) each bind GTP. 2 S-geranylgeranyl cysteine lipidation sites follow: Cys-219 and Cys-220.

Belongs to the small GTPase superfamily. Rab family.

The protein resides in the cell membrane. The protein is Ras-related protein Rab11D (RAB11D) of Nicotiana tabacum (Common tobacco).